A 618-amino-acid chain; its full sequence is MALLQISEPGQSPDPHQRRIAVGIDLGTTHSLVAAVRSGVAECLPDDEGRVILPSAVRYLEGGRRAIGFDALAAQAEDPENTIVSAKRFMGRTLTDIDDREKLPYRFVDQPGMVSVATRDGVKTPVEVSAELLATLRFRAEDSFDDELFGAVITVPAYFDDAQRQATKDAAQLAGLNVLRLINEPTAAAIAYGLENGSEGLYAVYDLGGGTFDISLLRLSEGVFEVVATGGDSALGGDDYDHALADWALAGAGLAAETAQDKRAVLVAARAVKEALSSAAEARMQVVLRAGLLDLAVTRVQFEALTKPLTDRTLAAVRKVLRDAKVSKDEVKGVVLVGGSTRMPQIREAVTLYLGRSPLTDLNPDEVVALGAAIQAHQLAGNASGNDLLLLDVTPLSLGLETMGGLVERIIPRNSSIPTARAQDFTTFKDGQTAMAIHVLQGEREQVEYCRSLARFELRGIPPMVAGAARIRVSFQVDADGLLSVTAREQTSGVEAAVTVKPSYGLADEQIARMLQEGFTTAEGDMRDRALREARVETERMVLATRAALAADGDLLADGERAGIEALMRAAEQQALGEDAAAIDAAVKALADGTESFAAERMNRGIRQALAGRRVEEV.

This sequence belongs to the heat shock protein 70 family.

Chaperone involved in the maturation of iron-sulfur cluster-containing proteins. Has a low intrinsic ATPase activity which is markedly stimulated by HscB. The protein is Chaperone protein HscA homolog of Methylibium petroleiphilum (strain ATCC BAA-1232 / LMG 22953 / PM1).